Consider the following 258-residue polypeptide: Small ribosomal subunit protein mS35 (258 aa).

The transit peptide at 1–39 (MAFNPLLSLLKADAIFLGQLSKSSFCATSRAFSVFYFTR) directs the protein to the mitochondrion.

This sequence belongs to the mitochondrion-specific ribosomal protein mS35 family. Component of the mitochondrial small ribosomal subunit (mt-SSU). Mature yeast 74S mitochondrial ribosomes consist of a small (37S) and a large (54S) subunit. The 37S small subunit contains a 15S ribosomal RNA (15S mt-rRNA) and at least 32 different proteins. The 54S large subunit contains a 21S rRNA (21S mt-rRNA) and at least 45 different proteins.

The protein resides in the mitochondrion. In terms of biological role, component of the mitochondrial ribosome (mitoribosome), a dedicated translation machinery responsible for the synthesis of mitochondrial genome-encoded proteins, including at least some of the essential transmembrane subunits of the mitochondrial respiratory chain. The mitoribosomes are attached to the mitochondrial inner membrane and translation products are cotranslationally integrated into the membrane. This is Small ribosomal subunit protein mS35 (rsm24) from Schizosaccharomyces pombe (strain 972 / ATCC 24843) (Fission yeast).